The sequence spans 309 residues: Ribonuclease Z (309 aa).

Positions 63, 65, 67, 68, 145, 216, and 274 each coordinate Zn(2+). Catalysis depends on D67, which acts as the Proton acceptor.

Belongs to the RNase Z family. Homodimer. Zn(2+) serves as cofactor.

The catalysed reaction is Endonucleolytic cleavage of RNA, removing extra 3' nucleotides from tRNA precursor, generating 3' termini of tRNAs. A 3'-hydroxy group is left at the tRNA terminus and a 5'-phosphoryl group is left at the trailer molecule.. Zinc phosphodiesterase, which displays some tRNA 3'-processing endonuclease activity. Probably involved in tRNA maturation, by removing a 3'-trailer from precursor tRNA. The polypeptide is Ribonuclease Z (Streptococcus uberis (strain ATCC BAA-854 / 0140J)).